Reading from the N-terminus, the 188-residue chain is V-type ATP synthase subunit E (188 aa).

Belongs to the V-ATPase E subunit family.

Functionally, produces ATP from ADP in the presence of a proton gradient across the membrane. The chain is V-type ATP synthase subunit E (atpE) from Thermus thermophilus (strain ATCC 27634 / DSM 579 / HB8).